Here is a 519-residue protein sequence, read N- to C-terminus: Cyclin-dependent kinase C-1 (519 aa).

Residues 25–325 (FEKLEQIGEG…AQDALDAEYF (301 aa)) enclose the Protein kinase domain. ATP-binding positions include 31 to 39 (IGEGTYGQV) and Lys54. Thr35 is subject to Phosphothreonine. Residue Tyr36 is modified to Phosphotyrosine. The active-site Proton acceptor is Asp164. Thr198 is modified (phosphothreonine). A compositionally biased stretch (basic and acidic residues) spans 336–348 (SLPKYESSHEFQT). The disordered stretch occupies residues 336–519 (SLPKYESSHE…RNQQQYGNWQ (184 aa)). Residues 426-444 (GNQGGGYPNRGGQGGGGSY) are compositionally biased toward gly residues. Low complexity predominate over residues 445–454 (GNAPYPQQGR). Gly residues-rich tracts occupy residues 464–483 (GMAG…GGGS) and 490–499 (GPYGPSGPGR). Polar residues predominate over residues 505 to 519 (QQGGSRNQQQYGNWQ).

It belongs to the protein kinase superfamily. CMGC Ser/Thr protein kinase family. CDC2/CDKX subfamily.

It carries out the reaction L-seryl-[protein] + ATP = O-phospho-L-seryl-[protein] + ADP + H(+). The catalysed reaction is L-threonyl-[protein] + ATP = O-phospho-L-threonyl-[protein] + ADP + H(+). The enzyme catalyses [DNA-directed RNA polymerase] + ATP = phospho-[DNA-directed RNA polymerase] + ADP + H(+). This chain is Cyclin-dependent kinase C-1 (CDKC-1), found in Oryza sativa subsp. japonica (Rice).